The primary structure comprises 539 residues: Nucleoporin NUP60 (539 aa).

Phosphoserine occurs at positions 10, 49, 81, and 89. Residues 44–80 (DSARVSPRNNVANKQPRNESFNRRISSMPGGYFHSEI) form a disordered region. Residues 91 to 118 (VVSAVGEARNDIENKEEEYDETHETNIS) are a coiled coil. 4 positions are modified to phosphoserine: Ser-162, Ser-171, Ser-214, and Ser-222. Composition is skewed to polar residues over residues 242 to 252 (TANTSAQSIAS) and 258 to 267 (SGVSKSAPSK). 3 disordered regions span residues 242-267 (TANT…APSK), 305-329 (IRKH…TTVK), and 347-493 (NATK…GKHI). The segment covering 347 to 359 (NATKISPSAPSKD) has biased composition (polar residues). 4 positions are modified to phosphoserine: Ser-352, Ser-360, Ser-374, and Ser-382. 2 stretches are compositionally biased toward polar residues: residues 395–433 (SAFN…TNLQ) and 448–485 (GDST…LSQE). 2 FXF repeats span residues 399–401 (FSF) and 427–429 (FNF). Thr-460 carries the phosphothreonine modification. The FXF 3 repeat unit spans residues 469–471 (FVF). Phosphoserine is present on residues Ser-480 and Ser-483. Residues 509–511 (FDF) form an FXF 4 repeat.

Component of the nuclear pore complex (NPC). NPC constitutes the exclusive means of nucleocytoplasmic transport. NPCs allow the passive diffusion of ions and small molecules and the active, nuclear transport receptor-mediated bidirectional transport of macromolecules such as proteins, RNAs, ribonucleoparticles (RNPs), and ribosomal subunits across the nuclear envelope. Due to its 8-fold rotational symmetry, all subunits are present with 8 copies or multiples thereof. Binds to NUP1 and NUP2 forming the nuclear basket and the distal ring. The interaction with NUP2 is GSP1-GTP-dependent. Interacts through its FG repeats with karyopherins, such as KAP123 and KAP95-SRP1 (KAP60). Also interacts with GSP1-GTP and SRM1 (PRP20), where NUP60 reduces SRM1 activity, thus inhibiting GSP1 guanine nucleotide dissociation. Post-translationally, phosphorylated by CDC28.

It localises to the nucleus. It is found in the nuclear pore complex. The protein localises to the nucleus membrane. In terms of biological role, functions as a component of the nuclear pore complex (NPC). NPC components, collectively referred to as nucleoporins (NUPs), can play the role of both NPC structural components and of docking or interaction partners for transiently associated nuclear transport factors. Active directional transport is assured by both, a Phe-Gly (FG) repeat affinity gradient for these transport factors across the NPC and a transport cofactor concentration gradient across the nuclear envelope (GSP1 and GSP2 GTPases associated predominantly with GTP in the nucleus, with GDP in the cytoplasm). The chain is Nucleoporin NUP60 (NUP60) from Saccharomyces cerevisiae (strain ATCC 204508 / S288c) (Baker's yeast).